The primary structure comprises 437 residues: Type II methyltransferase M.HgiCII (437 aa).

In terms of domain architecture, SAM-dependent MTase C5-type spans 4-431; it reads FRFIDLFAGI…KALPNDHLFE (428 aa). The active site involves C75.

The protein belongs to the class I-like SAM-binding methyltransferase superfamily. C5-methyltransferase family.

The enzyme catalyses a 2'-deoxycytidine in DNA + S-adenosyl-L-methionine = a 5-methyl-2'-deoxycytidine in DNA + S-adenosyl-L-homocysteine + H(+). In terms of biological role, a methylase that recognizes the double-stranded sequence 5'-GGWCC-3', methylates C-? on both strands and protects the DNA from cleavage by the HgiCII endonuclease. In Herpetosiphon aurantiacus (Herpetosiphon giganteus), this protein is Type II methyltransferase M.HgiCII.